We begin with the raw amino-acid sequence, 237 residues long: MNGEDPQERPDFIRAIINGLERYNPEAAGTLEAYLTQQCEEKFCDCNANRALLKLYQLNPDRIKDEVITNILVKAMTQFPSPQFDLALHLLSPSQSNPGPNSSSELTEAVSKLRALNAQLEGAEYARFWATLDSDDLYADLTTDIAGFEDMIRVRIAQLVGQSYREIQFPVLESWLGLNNSEATTQFITETCGWKVEGDVVQIPKNADNEARKAEIREDVNVDMFARVIKRSWEESA.

The PCI domain maps to 44–219 (CDCNANRALL…EARKAEIRED (176 aa)).

Belongs to the eIF-3 subunit K family. As to quaternary structure, component of the eukaryotic translation initiation factor 3 (eIF-3) complex.

Its subcellular location is the cytoplasm. In terms of biological role, component of the eukaryotic translation initiation factor 3 (eIF-3) complex, which is involved in protein synthesis of a specialized repertoire of mRNAs and, together with other initiation factors, stimulates binding of mRNA and methionyl-tRNAi to the 40S ribosome. The eIF-3 complex specifically targets and initiates translation of a subset of mRNAs involved in cell proliferation. The chain is Eukaryotic translation initiation factor 3 subunit K from Neurospora crassa (strain ATCC 24698 / 74-OR23-1A / CBS 708.71 / DSM 1257 / FGSC 987).